We begin with the raw amino-acid sequence, 291 residues long: Pirin-like protein (291 aa).

Belongs to the pirin family.

Its subcellular location is the nucleus. This Solanum lycopersicum (Tomato) protein is Pirin-like protein.